The following is a 162-amino-acid chain: UPF0305 protein MmarC7_1691 (162 aa).

Belongs to the UPF0305 family.

The chain is UPF0305 protein MmarC7_1691 from Methanococcus maripaludis (strain C7 / ATCC BAA-1331).